A 146-amino-acid chain; its full sequence is Deoxyuridine 5'-triphosphate nucleotidohydrolase (146 aa).

Substrate-binding positions include R66 to G68, N79, and T83 to D85.

The protein belongs to the dUTPase family. Mg(2+) is required as a cofactor.

It catalyses the reaction dUTP + H2O = dUMP + diphosphate + H(+). It participates in pyrimidine metabolism; dUMP biosynthesis; dUMP from dCTP (dUTP route): step 2/2. Functionally, this enzyme is involved in nucleotide metabolism: it produces dUMP, the immediate precursor of thymidine nucleotides and it decreases the intracellular concentration of dUTP so that uracil cannot be incorporated into DNA. The sequence is that of Deoxyuridine 5'-triphosphate nucleotidohydrolase from Citrifermentans bemidjiense (strain ATCC BAA-1014 / DSM 16622 / JCM 12645 / Bem) (Geobacter bemidjiensis).